The chain runs to 413 residues: Alpha-1-antitrypsin-like protein CM55-ST (413 aa).

An N-terminal signal peptide occupies residues 1-24 (MPSSISWGLLLLAALSCLGPGSLA). Pyrrolidone carboxylic acid is present on Gln-25. Asn-65, Asn-102, Asn-165, and Asn-266 each carry an N-linked (GlcNAc...) asparagine glycan. The tract at residues 368–387 (GGTVLGNIRSTLRYEVIFDR) is RCL.

Belongs to the serpin family. In terms of tissue distribution, expressed in liver.

The polypeptide is Alpha-1-antitrypsin-like protein CM55-ST (Tamias sibiricus (Siberian chipmunk)).